A 518-amino-acid polypeptide reads, in one-letter code: Nuclear receptor ROR-gamma (518 aa).

The segment at 1–30 is modulating; it reads MDRAPQRQHQASRELLAAKKTHTSQIEVIP. NR C4-type zinc fingers lie at residues 31–51 and 67–91; these read CKIC…CEGC and CTRQ…LQKC. Positions 31–96 form a DNA-binding region, nuclear receptor; sequence CKICGDKSSG…RLQKCLALGM (66 aa). Disordered regions lie at residues 105–183 and 238–258; these read RMSK…SGSG and HPGL…SFRS. Over residues 109 to 118 the composition is skewed to basic and acidic residues; it reads KQRDSLHAEV. A compositionally biased stretch (low complexity) spans 119-130; the sequence is QKQLQQRQQQQQ. An NR LBD domain is found at 269–508; sequence EIEHLVQSVC…PPLYKELFST (240 aa). Positions 501–506 match the AF-2 motif; the sequence is LYKELF.

The protein belongs to the nuclear hormone receptor family. NR1 subfamily. In terms of assembly, interacts (via AF-2 motif) with the coactivators NCOA1, NCOA2 and PPARGC1A (via LXXLL motif). Interacts with the corepressor NCOR1. Interacts with CRY1. Interacts (via AF-2 motif) with PROX1. Interacts with FOXP3. Interacts with NR0B2.

The protein resides in the nucleus. Its function is as follows. Nuclear receptor that binds DNA as a monomer to ROR response elements (RORE) containing a single core motif half-site 5'-AGGTCA-3' preceded by a short A-T-rich sequence. Key regulator of cellular differentiation, immunity, peripheral circadian rhythm as well as lipid, steroid, xenobiotics and glucose metabolism. Considered to have intrinsic transcriptional activity, have some natural ligands like oxysterols that act as agonists (25-hydroxycholesterol) or inverse agonists (7-oxygenated sterols), enhancing or repressing the transcriptional activity, respectively. Recruits distinct combinations of cofactors to target gene regulatory regions to modulate their transcriptional expression, depending on the tissue, time and promoter contexts. Regulates the circadian expression of clock genes such as CRY1, BMAL1 and NR1D1 in peripheral tissues and in a tissue-selective manner. Competes with NR1D1 for binding to their shared DNA response element on some clock genes such as BMAL1, CRY1 and NR1D1 itself, resulting in NR1D1-mediated repression or RORC-mediated activation of the expression, leading to the circadian pattern of clock genes expression. Therefore influences the period length and stability of the clock. Involved in the regulation of the rhythmic expression of genes involved in glucose and lipid metabolism, including PLIN2 and AVPR1A. Negative regulator of adipocyte differentiation through the regulation of early phase genes expression, such as MMP3. Controls adipogenesis as well as adipocyte size and modulates insulin sensitivity in obesity. In liver, has specific and redundant functions with RORA as positive or negative modulator of expression of genes encoding phase I and Phase II proteins involved in the metabolism of lipids, steroids and xenobiotics, such as SULT1E1. Also plays a role in the regulation of hepatocyte glucose metabolism through the regulation of G6PC1 and PCK1. Essential for thymopoiesis and the development of several secondary lymphoid tissues, including lymph nodes and Peyer's patches. Required for the generation of LTi (lymphoid tissue inducer) cells. Regulates thymocyte survival through DNA-binding on ROREs of target gene promoter regions and recruitment of coactivaros via the AF-2. Also plays a key role, downstream of IL6 and TGFB and synergistically with RORA, for lineage specification of uncommitted CD4(+) T-helper (T(H)) cells into T(H)17 cells, antagonizing the T(H)1 program. Probably regulates IL17 and IL17F expression on T(H) by binding to the essential enhancer conserved non-coding sequence 2 (CNS2) in the IL17-IL17F locus. May also play a role in the pre-TCR activation cascade leading to the maturation of alpha/beta T-cells and may participate in the regulation of DNA accessibility in the TCR-J(alpha) locus. Regulates the rhythmic expression of PROX1 and promotes its nuclear localization. Plays an indispensable role in the induction of IFN-gamma dependent anti-mycobacterial systemic immunity. The protein is Nuclear receptor ROR-gamma (RORC) of Pongo abelii (Sumatran orangutan).